The following is a 541-amino-acid chain: Tyrosine-protein kinase Yes (541 aa).

Residues 1 to 20 are compositionally biased toward basic and acidic residues; it reads MGCIKSKEDKGPAMKYRTDN. Residues 1 to 43 are disordered; that stretch reads MGCIKSKEDKGPAMKYRTDNTPEPISSHVSHYGSDSSQATQSP. G2 carries N-myristoyl glycine lipidation. C3 is lipidated: S-palmitoyl cysteine; in membrane form. A compositionally biased stretch (low complexity) spans 26–37; the sequence is SSHVSHYGSDSS. The SH3 domain occupies 89–150; sequence GGVTVFVALY…PSNYVAPADS (62 aa). Residues 156-253 form the SH2 domain; the sequence is WYFGKMGRKD…GLCHKLTTVC (98 aa). Positions 275–528 constitute a Protein kinase domain; the sequence is LRLEVKLGQG…YIQSFLEDYF (254 aa). Residues 281 to 289 and K303 each bind ATP; that span reads LGQGCFGEV. The active-site Proton acceptor is D394. Y424 bears the Phosphotyrosine; by autocatalysis mark. Residue Y535 is modified to Phosphotyrosine; by CSK.

It belongs to the protein kinase superfamily. Tyr protein kinase family. SRC subfamily. Autophosphorylation at Tyr-424 maintains enzyme activity. Post-translationally, palmitoylation at Cys-3 promotes membrane localization.

It is found in the cell membrane. It localises to the cytoplasm. Its subcellular location is the cytoskeleton. The protein resides in the microtubule organizing center. The protein localises to the centrosome. It is found in the cytosol. It localises to the cell junction. The catalysed reaction is L-tyrosyl-[protein] + ATP = O-phospho-L-tyrosyl-[protein] + ADP + H(+). Functionally, non-receptor protein tyrosine kinase that is involved in the regulation of cell growth and survival, apoptosis, cell-cell adhesion, cytoskeleton remodeling, differentiation, G2/M progression and cytokinesis. The protein is Tyrosine-protein kinase Yes (YES1) of Gallus gallus (Chicken).